The chain runs to 317 residues: Apolipoprotein E (317 aa).

The signal sequence occupies residues 1 to 18 (MKVLWAALLVTFLAGCQA). 8 tandem repeats follow at residues 80-101 (TLMD…EQLS), 102-123 (PVAE…ARLG), 124-145 (ADME…AMLG), 146-167 (QSTE…KRLL), 168-189 (RDAD…EGAE), 190-211 (RGVS…VRAA), 212-233 (TVGS…ERLR), and 234-255 (ARME…EQVA). The segment at 80 to 255 (TLMDETMKEL…RLDEVKEQVA (176 aa)) is 8 X 22 AA approximate tandem repeats. A Methionine sulfoxide modification is found at methionine 143. A Phosphoserine modification is found at serine 147. An LDL and other lipoprotein receptors binding region spans residues 158–168 (HLRKLRKRLLR). 162-165 (LRKR) provides a ligand contact to heparin. The interval 210–290 (AATVGSLASQ…SWFEPLVEDM (81 aa)) is lipid-binding and lipoprotein association. A heparin-binding site is contributed by 229-236 (GERLRARM). Positions 266 to 317 (QQISLQAEAFQARLKSWFEPLVEDMQRQWAGLVEKVQAAVGASTAPVPSDNH) are homooligomerization. Residues 278 to 290 (RLKSWFEPLVEDM) form a specificity for association with VLDL region.

The protein belongs to the apolipoprotein A1/A4/E family. In terms of assembly, homotetramer. May interact with ABCA1; functionally associated with ABCA1 in the biogenesis of HDLs. May interact with APP/A4 amyloid-beta peptide; the interaction is extremely stable in vitro but its physiological significance is unclear. May interact with MAPT. May interact with MAP2. In the cerebrospinal fluid, interacts with secreted SORL1. Interacts with PMEL; this allows the loading of PMEL luminal fragment on ILVs to induce fibril nucleation. APOE exists as multiple glycosylated and sialylated glycoforms within cells and in plasma. The extent of glycosylation and sialylation are tissue and context specific. Post-translationally, glycated in plasma VLDL. In terms of processing, phosphorylated by FAM20C in the extracellular medium.

It is found in the secreted. It localises to the extracellular space. The protein resides in the extracellular matrix. The protein localises to the extracellular vesicle. Its subcellular location is the endosome. It is found in the multivesicular body. In terms of biological role, APOE is an apolipoprotein, a protein associating with lipid particles, that mainly functions in lipoprotein-mediated lipid transport between organs via the plasma and interstitial fluids. APOE is a core component of plasma lipoproteins and is involved in their production, conversion and clearance. Apolipoproteins are amphipathic molecules that interact both with lipids of the lipoprotein particle core and the aqueous environment of the plasma. As such, APOE associates with chylomicrons, chylomicron remnants, very low density lipoproteins (VLDL) and intermediate density lipoproteins (IDL) but shows a preferential binding to high-density lipoproteins (HDL). It also binds a wide range of cellular receptors including the LDL receptor/LDLR, the LDL receptor-related proteins LRP1, LRP2 and LRP8 and the very low-density lipoprotein receptor/VLDLR that mediate the cellular uptake of the APOE-containing lipoprotein particles. Finally, APOE also has a heparin-binding activity and binds heparan-sulfate proteoglycans on the surface of cells, a property that supports the capture and the receptor-mediated uptake of APOE-containing lipoproteins by cells. A main function of APOE is to mediate lipoprotein clearance through the uptake of chylomicrons, VLDLs, and HDLs by hepatocytes. APOE is also involved in the biosynthesis by the liver of VLDLs as well as their uptake by peripheral tissues ensuring the delivery of triglycerides and energy storage in muscle, heart and adipose tissues. By participating in the lipoprotein-mediated distribution of lipids among tissues, APOE plays a critical role in plasma and tissues lipid homeostasis. APOE is also involved in two steps of reverse cholesterol transport, the HDLs-mediated transport of cholesterol from peripheral tissues to the liver, and thereby plays an important role in cholesterol homeostasis. First, it is functionally associated with ABCA1 in the biogenesis of HDLs in tissues. Second, it is enriched in circulating HDLs and mediates their uptake by hepatocytes. APOE also plays an important role in lipid transport in the central nervous system, regulating neuron survival and sprouting. This chain is Apolipoprotein E (APOE), found in Theropithecus gelada (Gelada baboon).